Consider the following 208-residue polypeptide: Thiamine-phosphate synthase (208 aa).

Residues 36–40 (QLRMK) and aspartate 68 each bind 4-amino-2-methyl-5-(diphosphooxymethyl)pyrimidine. The Mg(2+) site is built by aspartate 69 and aspartate 88. Threonine 107 serves as a coordination point for 4-amino-2-methyl-5-(diphosphooxymethyl)pyrimidine. 133 to 135 (TTT) is a binding site for 2-[(2R,5Z)-2-carboxy-4-methylthiazol-5(2H)-ylidene]ethyl phosphate. Lysine 136 serves as a coordination point for 4-amino-2-methyl-5-(diphosphooxymethyl)pyrimidine. Residue glycine 169 participates in 2-[(2R,5Z)-2-carboxy-4-methylthiazol-5(2H)-ylidene]ethyl phosphate binding.

This sequence belongs to the thiamine-phosphate synthase family. Requires Mg(2+) as cofactor.

It catalyses the reaction 2-[(2R,5Z)-2-carboxy-4-methylthiazol-5(2H)-ylidene]ethyl phosphate + 4-amino-2-methyl-5-(diphosphooxymethyl)pyrimidine + 2 H(+) = thiamine phosphate + CO2 + diphosphate. It carries out the reaction 2-(2-carboxy-4-methylthiazol-5-yl)ethyl phosphate + 4-amino-2-methyl-5-(diphosphooxymethyl)pyrimidine + 2 H(+) = thiamine phosphate + CO2 + diphosphate. The catalysed reaction is 4-methyl-5-(2-phosphooxyethyl)-thiazole + 4-amino-2-methyl-5-(diphosphooxymethyl)pyrimidine + H(+) = thiamine phosphate + diphosphate. The protein operates within cofactor biosynthesis; thiamine diphosphate biosynthesis; thiamine phosphate from 4-amino-2-methyl-5-diphosphomethylpyrimidine and 4-methyl-5-(2-phosphoethyl)-thiazole: step 1/1. In terms of biological role, condenses 4-methyl-5-(beta-hydroxyethyl)thiazole monophosphate (THZ-P) and 2-methyl-4-amino-5-hydroxymethyl pyrimidine pyrophosphate (HMP-PP) to form thiamine monophosphate (TMP). The polypeptide is Thiamine-phosphate synthase (Phocaeicola vulgatus (strain ATCC 8482 / DSM 1447 / JCM 5826 / CCUG 4940 / NBRC 14291 / NCTC 11154) (Bacteroides vulgatus)).